Consider the following 185-residue polypeptide: Large ribosomal subunit protein uL10 (185 aa).

The tract at residues 165 to 185 is disordered; that stretch reads LRAKKEEQGGAGTPAPAEAAE.

The protein belongs to the universal ribosomal protein uL10 family. In terms of assembly, part of the ribosomal stalk of the 50S ribosomal subunit. The N-terminus interacts with L11 and the large rRNA to form the base of the stalk. The C-terminus forms an elongated spine to which L12 dimers bind in a sequential fashion forming a multimeric L10(L12)X complex.

Forms part of the ribosomal stalk, playing a central role in the interaction of the ribosome with GTP-bound translation factors. This chain is Large ribosomal subunit protein uL10, found in Streptomyces griseus subsp. griseus (strain JCM 4626 / CBS 651.72 / NBRC 13350 / KCC S-0626 / ISP 5235).